The following is a 360-amino-acid chain: Phospho-N-acetylmuramoyl-pentapeptide-transferase (360 aa).

The next 10 membrane-spanning stretches (helical) occupy residues 25–45 (RGIL…PWMI), 73–93 (TMGG…WADL), 97–117 (YVWV…VDDY), 142–162 (VGAA…TLII), 168–188 (ASIP…VGSS), 199–219 (GLAI…CYLS), 236–256 (AGEL…FLWF), 263–283 (VFMG…IAVI), 288–308 (IVLF…VIQV), and 338–358 (VIVR…ATLK).

It belongs to the glycosyltransferase 4 family. MraY subfamily. It depends on Mg(2+) as a cofactor.

It is found in the cell inner membrane. The enzyme catalyses UDP-N-acetyl-alpha-D-muramoyl-L-alanyl-gamma-D-glutamyl-meso-2,6-diaminopimeloyl-D-alanyl-D-alanine + di-trans,octa-cis-undecaprenyl phosphate = di-trans,octa-cis-undecaprenyl diphospho-N-acetyl-alpha-D-muramoyl-L-alanyl-D-glutamyl-meso-2,6-diaminopimeloyl-D-alanyl-D-alanine + UMP. The protein operates within cell wall biogenesis; peptidoglycan biosynthesis. Catalyzes the initial step of the lipid cycle reactions in the biosynthesis of the cell wall peptidoglycan: transfers peptidoglycan precursor phospho-MurNAc-pentapeptide from UDP-MurNAc-pentapeptide onto the lipid carrier undecaprenyl phosphate, yielding undecaprenyl-pyrophosphoryl-MurNAc-pentapeptide, known as lipid I. This is Phospho-N-acetylmuramoyl-pentapeptide-transferase from Pseudomonas fluorescens (strain SBW25).